Here is a 553-residue protein sequence, read N- to C-terminus: Glutamate--tRNA ligase (553 aa).

A 'HIGH' region motif is present at residues Pro-41–Gly-51. A 'KMSKS' region motif is present at residues Lys-293 to Arg-297. Lys-296 lines the ATP pocket.

It belongs to the class-I aminoacyl-tRNA synthetase family. Glutamate--tRNA ligase type 1 subfamily. As to quaternary structure, monomer.

Its subcellular location is the cytoplasm. The catalysed reaction is tRNA(Glu) + L-glutamate + ATP = L-glutamyl-tRNA(Glu) + AMP + diphosphate. Its function is as follows. Catalyzes the attachment of glutamate to tRNA(Glu) in a two-step reaction: glutamate is first activated by ATP to form Glu-AMP and then transferred to the acceptor end of tRNA(Glu). The protein is Glutamate--tRNA ligase of Clostridium beijerinckii (strain ATCC 51743 / NCIMB 8052) (Clostridium acetobutylicum).